The chain runs to 142 residues: Hemoglobin subunit zeta (142 aa).

Ser2 bears the N-acetylserine mark. The region spanning 2 to 142 (SLTKAERTMV…VSSVLTEKYR (141 aa)) is the Globin domain. Phosphoserine is present on Ser53. His59 contacts heme b. Ser73 carries the post-translational modification Phosphoserine. A heme b-binding site is contributed by His88.

The protein belongs to the globin family. As to quaternary structure, heterotetramer of two zeta chains and beta-type chains.

Functionally, the zeta chain is an alpha-type chain of mammalian embryonic hemoglobin. In Equus caballus (Horse), this protein is Hemoglobin subunit zeta (HBZ1).